We begin with the raw amino-acid sequence, 262 residues long: Zinc import ATP-binding protein ZnuC (262 aa).

The ABC transporter domain occupies 5–220 (VSLEQLCVEF…PSYIALFGNA (216 aa)). 37–44 (GPNGAGKS) provides a ligand contact to ATP. A disordered region spans residues 236-262 (HHDLSGSPVSGDATSCSNHNHGHHHHD).

Belongs to the ABC transporter superfamily. Zinc importer (TC 3.A.1.15.5) family. The complex is composed of two ATP-binding proteins (ZnuC), two transmembrane proteins (ZnuB) and a solute-binding protein (ZnuA).

The protein resides in the cell inner membrane. It catalyses the reaction Zn(2+)(out) + ATP(in) + H2O(in) = Zn(2+)(in) + ADP(in) + phosphate(in) + H(+)(in). In terms of biological role, part of the ABC transporter complex ZnuABC involved in zinc import. Responsible for energy coupling to the transport system. The protein is Zinc import ATP-binding protein ZnuC of Vibrio parahaemolyticus serotype O3:K6 (strain RIMD 2210633).